A 276-amino-acid polypeptide reads, in one-letter code: Outer plastidial membrane protein porin (276 aa).

It belongs to the eukaryotic mitochondrial porin (TC 1.B.8.1) family.

Its subcellular location is the plastid outer membrane. Functionally, forms a channel through the cell membrane that allows diffusion of small hydrophilic molecules. The channel adopts an open conformation at low or zero membrane potential and a closed conformation at potentials above 30-40 mV. The open state has a weak anion selectivity whereas the closed state is cation-selective. The sequence is that of Outer plastidial membrane protein porin (POR1) from Pisum sativum (Garden pea).